Reading from the N-terminus, the 508-residue chain is 2,3-bisphosphoglycerate-independent phosphoglycerate mutase (508 aa).

Residues Asp-9 and Ser-59 each coordinate Mn(2+). The active-site Phosphoserine intermediate is Ser-59. Residues His-120, 149–150, Arg-181, Arg-187, 254–257, and Lys-331 each bind substrate; these read RD and RADR. Mn(2+) contacts are provided by Asp-398, His-402, Asp-439, His-440, and His-456.

Belongs to the BPG-independent phosphoglycerate mutase family. The cofactor is Mn(2+).

It carries out the reaction (2R)-2-phosphoglycerate = (2R)-3-phosphoglycerate. It functions in the pathway carbohydrate degradation; glycolysis; pyruvate from D-glyceraldehyde 3-phosphate: step 3/5. Functionally, catalyzes the interconversion of 2-phosphoglycerate and 3-phosphoglycerate. In Halobacterium salinarum (strain ATCC 700922 / JCM 11081 / NRC-1) (Halobacterium halobium), this protein is 2,3-bisphosphoglycerate-independent phosphoglycerate mutase.